Reading from the N-terminus, the 497-residue chain is Zinc finger CCCH domain-containing protein 22 (497 aa).

A C3H1-type zinc finger spans residues 136 to 163 (SESMMICKFFMQQRCRFGSSCRSSHGLD). The tract at residues 236-281 (AQMTDDDGEEEEEEDEQQSASDSEDSVSSDYDEGSPQGIGFLESTN) is disordered. The span at 239 to 268 (TDDDGEEEEEEDEQQSASDSEDSVSSDYDE) shows a compositional bias: acidic residues. The G-patch domain occupies 300-346 (TRGIASKMMASMGYREGMGLGVSGQGILNPILVKVLPAKRSLDYALE). Residues 352-387 (ECKSEKQKKKRSRGGKRKRGKKFAEAAKAAKQEEES) form a disordered region. The span at 357–372 (KQKKKRSRGGKRKRGK) shows a compositional bias: basic residues. Residues 373–387 (KFAEAAKAAKQEEES) are compositionally biased toward basic and acidic residues.

This Arabidopsis thaliana (Mouse-ear cress) protein is Zinc finger CCCH domain-containing protein 22.